Reading from the N-terminus, the 265-residue chain is HUWE1-associated protein modifying stress responses (265 aa).

Disordered stretches follow at residues 1 to 22 (MEEK…HWFS), 140 to 173 (GKAP…SVET), and 194 to 219 (ISMR…RRNG). Residues 147–172 (SSRAPPRLAMVSPSRSTPSETSSSVE) are compositionally biased toward low complexity.

It belongs to the HAPSTR1 family. As to quaternary structure, oligomer.

Its subcellular location is the nucleus. The protein resides in the cytoplasm. Functionally, acts as a central player within a network of stress response pathways promoting cellular adaptability. Functions as a negative regulator of TP53/P53 in the cellular response to telomere erosion and probably also DNA damage. This Danio rerio (Zebrafish) protein is HUWE1-associated protein modifying stress responses.